The chain runs to 220 residues: UPF0319 protein YccT (220 aa).

An N-terminal signal peptide occupies residues 1 to 20 (MKTGALATFLALCLPVTVFA).

It belongs to the UPF0319 family.

This is UPF0319 protein YccT from Salmonella enteritidis PT4 (strain P125109).